Consider the following 223-residue polypeptide: ATP synthase subunit a 2 (223 aa).

A run of 5 helical transmembrane segments spans residues 17-37 (VAIT…ALVC), 77-97 (FLPL…SGVL), 106-126 (KIET…YFGV), 173-193 (FIIG…LMAL), and 195-215 (ILVG…FIGA).

Belongs to the ATPase A chain family. As to quaternary structure, F-type ATPases have 2 components, CF(1) - the catalytic core - and CF(0) - the membrane proton channel. CF(1) has five subunits: alpha(3), beta(3), gamma(1), delta(1), epsilon(1). CF(0) has four main subunits: a, b, b' and c.

It localises to the cell inner membrane. Key component of the proton channel; it plays a direct role in the translocation of protons across the membrane. The chain is ATP synthase subunit a 2 from Bradyrhizobium sp. (strain BTAi1 / ATCC BAA-1182).